Here is a 391-residue protein sequence, read N- to C-terminus: DNA polymerase IV (391 aa).

In terms of domain architecture, UmuC spans 6–187 (IIHVDMDAFF…LPVEMLWGVG (182 aa)). 2 residues coordinate Mg(2+): D10 and D105. The active site involves E106.

The protein belongs to the DNA polymerase type-Y family. In terms of assembly, monomer. Mg(2+) serves as cofactor.

The protein localises to the cytoplasm. The enzyme catalyses DNA(n) + a 2'-deoxyribonucleoside 5'-triphosphate = DNA(n+1) + diphosphate. Its function is as follows. Poorly processive, error-prone DNA polymerase involved in untargeted mutagenesis. Copies undamaged DNA at stalled replication forks, which arise in vivo from mismatched or misaligned primer ends. These misaligned primers can be extended by PolIV. Exhibits no 3'-5' exonuclease (proofreading) activity. May be involved in translesional synthesis, in conjunction with the beta clamp from PolIII. The sequence is that of DNA polymerase IV from Carboxydothermus hydrogenoformans (strain ATCC BAA-161 / DSM 6008 / Z-2901).